Reading from the N-terminus, the 198-residue chain is Carnitine operon protein CaiE (198 aa).

Residues 179-198 form a disordered region; the sequence is VEENRPRLKGTTDVKPKSAQ. The span at 180–198 shows a compositional bias: basic and acidic residues; sequence EENRPRLKGTTDVKPKSAQ.

It belongs to the transferase hexapeptide repeat family.

The protein operates within amine and polyamine metabolism; carnitine metabolism. Functionally, overproduction of CaiE stimulates the activity of CaiB and CaiD. The polypeptide is Carnitine operon protein CaiE (Salmonella choleraesuis (strain SC-B67)).